We begin with the raw amino-acid sequence, 185 residues long: Hypoxanthine/guanine phosphoribosyltransferase (185 aa).

This sequence belongs to the purine/pyrimidine phosphoribosyltransferase family. Archaeal HPRT subfamily. As to quaternary structure, homodimer.

The protein resides in the cytoplasm. It catalyses the reaction IMP + diphosphate = hypoxanthine + 5-phospho-alpha-D-ribose 1-diphosphate. The catalysed reaction is GMP + diphosphate = guanine + 5-phospho-alpha-D-ribose 1-diphosphate. It participates in purine metabolism; IMP biosynthesis via salvage pathway; IMP from hypoxanthine: step 1/1. Catalyzes a salvage reaction resulting in the formation of IMP that is energically less costly than de novo synthesis. The protein is Hypoxanthine/guanine phosphoribosyltransferase of Aciduliprofundum boonei (strain DSM 19572 / T469).